A 328-amino-acid polypeptide reads, in one-letter code: ATP synthase mitochondrial F1 complex assembly factor 1 (328 aa).

A mitochondrion-targeting transit peptide spans 1 to 57 (MAAVVVAAAGGAGPAVLQVAGLYRGLCAVRSRALGLGLVSPAQLRVFPVRPGSGRPE).

It belongs to the ATP11 family. As to quaternary structure, interacts with ATP5F1B; involved in the assembly of the F1 component of the mitochondrial ATP synthase (ATPase). As to expression, weakly expressed in muscle.

It is found in the mitochondrion inner membrane. In terms of biological role, has a complex stabilizing activity in the assembly of the mitochondrial F1-F0 complex. The polypeptide is ATP synthase mitochondrial F1 complex assembly factor 1 (Homo sapiens (Human)).